A 178-amino-acid polypeptide reads, in one-letter code: Large ribosomal subunit protein uL6 (178 aa).

This sequence belongs to the universal ribosomal protein uL6 family. Part of the 50S ribosomal subunit.

In terms of biological role, this protein binds to the 23S rRNA, and is important in its secondary structure. It is located near the subunit interface in the base of the L7/L12 stalk, and near the tRNA binding site of the peptidyltransferase center. The protein is Large ribosomal subunit protein uL6 of Campylobacter lari (strain RM2100 / D67 / ATCC BAA-1060).